A 537-amino-acid chain; its full sequence is uncharacterized protein (537 aa).

This is an uncharacterized protein from Methanocaldococcus jannaschii (strain ATCC 43067 / DSM 2661 / JAL-1 / JCM 10045 / NBRC 100440) (Methanococcus jannaschii).